Consider the following 224-residue polypeptide: Phosphoribosylformylglycinamidine synthase subunit PurQ (224 aa).

In terms of domain architecture, Glutamine amidotransferase type-1 spans 4–224; sequence FGIIVFPGSN…ATDGLAMFIS (221 aa). Cys-87 acts as the Nucleophile in catalysis. Catalysis depends on residues His-204 and Glu-206.

In terms of assembly, part of the FGAM synthase complex composed of 1 PurL, 1 PurQ and 2 PurS subunits.

It is found in the cytoplasm. It catalyses the reaction N(2)-formyl-N(1)-(5-phospho-beta-D-ribosyl)glycinamide + L-glutamine + ATP + H2O = 2-formamido-N(1)-(5-O-phospho-beta-D-ribosyl)acetamidine + L-glutamate + ADP + phosphate + H(+). The enzyme catalyses L-glutamine + H2O = L-glutamate + NH4(+). The protein operates within purine metabolism; IMP biosynthesis via de novo pathway; 5-amino-1-(5-phospho-D-ribosyl)imidazole from N(2)-formyl-N(1)-(5-phospho-D-ribosyl)glycinamide: step 1/2. Part of the phosphoribosylformylglycinamidine synthase complex involved in the purines biosynthetic pathway. Catalyzes the ATP-dependent conversion of formylglycinamide ribonucleotide (FGAR) and glutamine to yield formylglycinamidine ribonucleotide (FGAM) and glutamate. The FGAM synthase complex is composed of three subunits. PurQ produces an ammonia molecule by converting glutamine to glutamate. PurL transfers the ammonia molecule to FGAR to form FGAM in an ATP-dependent manner. PurS interacts with PurQ and PurL and is thought to assist in the transfer of the ammonia molecule from PurQ to PurL. The protein is Phosphoribosylformylglycinamidine synthase subunit PurQ of Synechocystis sp. (strain ATCC 27184 / PCC 6803 / Kazusa).